A 369-amino-acid polypeptide reads, in one-letter code: N-succinyl-L-Arg/Lys racemase (369 aa).

Residues tyrosine 26, aspartate 51, 161–163 (KMK), and 191–193 (DVN) contribute to the substrate site. Mg(2+) is bound by residues aspartate 191, glutamate 218, and aspartate 243. Substrate contacts are provided by residues lysine 267, 295–296 (SM), and 320–322 (ELT).

Belongs to the mandelate racemase/muconate lactonizing enzyme family. The cofactor is Mg(2+).

Catalyzes efficient racemization of N-succinyl-L-Arg and N-succinyl-L-Lys, suggesting that these are physiological substrates of this enzyme. Has low activity with L-Asp-L-Lys, and even lower activity with L-Leu-L-Arg, L-Leu-L-Lys, N-succinyl-L-His and N-succinyl-L-Met (in vitro). The sequence is that of N-succinyl-L-Arg/Lys racemase from Bacillus cereus (strain ATCC 14579 / DSM 31 / CCUG 7414 / JCM 2152 / NBRC 15305 / NCIMB 9373 / NCTC 2599 / NRRL B-3711).